A 246-amino-acid polypeptide reads, in one-letter code: Aquaporin SIP1-1 (246 aa).

The next 2 membrane-spanning stretches (helical) occupy residues 13–33 and 45–65; these read AAVT…TAAV and YALL…NLLC. Residues 74–76 carry the NPA 1 motif; sequence NPT. A run of 3 helical transmembrane segments spans residues 95-115, 139-159, and 166-186; these read FPLA…AMAI, GAAA…WIIV, and IVKT…GAAY. Residues 192–194 carry the NPA 2 motif; the sequence is NPA. The chain crosses the membrane as a helical span at residues 214–234; the sequence is VYWICPFVGAVLAAWVFRAVF.

This sequence belongs to the MIP/aquaporin (TC 1.A.8) family. SIP (TC 1.A.8.10) subfamily. Expressed in roots, leaves and anthers.

Its subcellular location is the membrane. Aquaporins facilitate the transport of water and small neutral solutes across cell membranes. The polypeptide is Aquaporin SIP1-1 (SIP1-1) (Oryza sativa subsp. japonica (Rice)).